A 312-amino-acid chain; its full sequence is Glycerol-3-phosphate dehydrogenase [NAD(P)+] (312 aa).

4 residues coordinate NADPH: Trp-11, Arg-30, Arg-31, and Lys-95. Lys-95, Gly-123, and Ser-125 together coordinate sn-glycerol 3-phosphate. Residue Ala-127 coordinates NADPH. Sn-glycerol 3-phosphate contacts are provided by Lys-177, Asp-230, Ser-240, Arg-241, and Asn-242. Residue Lys-177 is the Proton acceptor of the active site. An NADPH-binding site is contributed by Arg-241. NADPH-binding residues include Val-265 and Glu-267.

This sequence belongs to the NAD-dependent glycerol-3-phosphate dehydrogenase family.

Its subcellular location is the cytoplasm. It catalyses the reaction sn-glycerol 3-phosphate + NAD(+) = dihydroxyacetone phosphate + NADH + H(+). The catalysed reaction is sn-glycerol 3-phosphate + NADP(+) = dihydroxyacetone phosphate + NADPH + H(+). Its pathway is membrane lipid metabolism; glycerophospholipid metabolism. Catalyzes the reduction of the glycolytic intermediate dihydroxyacetone phosphate (DHAP) to sn-glycerol 3-phosphate (G3P), the key precursor for phospholipid synthesis. This chain is Glycerol-3-phosphate dehydrogenase [NAD(P)+], found in Helicobacter pylori (strain P12).